Reading from the N-terminus, the 802-residue chain is MSTPLPTQDPPDIPEVLPILPLNNVVLFPGMFLPLVVSGDTWVKLVDEAALATKMVGVFMRTQPGEGFDPLALARTGAVALIVRMLRLPHGAVQILVQGQARIQIRQLIVTEPYPQARVAIHRDPAVLSVEVSGLARAALAAFQQIIQLSPTLPDELAIVAANTAQPGMLADLIAANLNLKPEDQQLVLDTLDVQERLRQVLSFLEREREILTIGRKAQEEMSKSQREYVLRQQLEAIKRELGETDDHAAEIAELRRRLEAANLPEEARKEAEREISRLERMPPGAAEYVVARTYLDWLLDLPWNVSTEDNLDLTQARQVLDEDHYDLERIKERIIEYLAVRKLRLEQDASGSARGPILCFVGPPGVGKTSLGTSIARALGRKFVRVALGGVRDEAEIRGHRRTYIGALPGRIIQGINRAGSNNPVFMLDEVDKLSVGFQGDPAAALLEVLDPEQNVAFVDRYLDVPFDLSRALFICTANRSDTIPPALLDRMELLELAGYTEMEKLEICRRYLIQRQRNEQGLAERAPTITEAALRRLIREYTHEAGVRDLERRIGAIYRKMATRAAEGQPLPDQVDAPDLDDLLGPPRFRSETLLGEDEVGVVTGLAWTPTGGDVLFVEASVVPGNGQLTLTGQLGDVMKESARAALTYARSRARALNIPTDFAQICDIHIHVPAGAVPKDGPSAGITMASALISALTDRRAYKHVAMTGEITLRGKVLPIGGVKEKVLAAQRAGVRTVLLPKANAPDLRELPEETRQQIDIVLVEHMDEVLPRVLHPKSESVTLAEPAPPDGAGTVQAT.

The 193-residue stretch at 17 to 209 (LPILPLNNVV…QVLSFLERER (193 aa)) folds into the Lon N-terminal domain. Position 363–370 (363–370 (GPPGVGKT)) interacts with ATP. The 182-residue stretch at 599–780 (EDEVGVVTGL…DEVLPRVLHP (182 aa)) folds into the Lon proteolytic domain. Active-site residues include S686 and K729.

This sequence belongs to the peptidase S16 family. As to quaternary structure, homohexamer. Organized in a ring with a central cavity.

The protein resides in the cytoplasm. It catalyses the reaction Hydrolysis of proteins in presence of ATP.. Functionally, ATP-dependent serine protease that mediates the selective degradation of mutant and abnormal proteins as well as certain short-lived regulatory proteins. Required for cellular homeostasis and for survival from DNA damage and developmental changes induced by stress. Degrades polypeptides processively to yield small peptide fragments that are 5 to 10 amino acids long. Binds to DNA in a double-stranded, site-specific manner. This chain is Lon protease, found in Roseiflexus castenholzii (strain DSM 13941 / HLO8).